A 514-amino-acid chain; its full sequence is ATP synthase subunit alpha (514 aa).

Residue 170-177 (GDRQTGKT) participates in ATP binding.

The protein belongs to the ATPase alpha/beta chains family. In terms of assembly, F-type ATPases have 2 components, CF(1) - the catalytic core - and CF(0) - the membrane proton channel. CF(1) has five subunits: alpha(3), beta(3), gamma(1), delta(1), epsilon(1). CF(0) has three main subunits: a(1), b(2) and c(9-12). The alpha and beta chains form an alternating ring which encloses part of the gamma chain. CF(1) is attached to CF(0) by a central stalk formed by the gamma and epsilon chains, while a peripheral stalk is formed by the delta and b chains.

It localises to the cell inner membrane. It catalyses the reaction ATP + H2O + 4 H(+)(in) = ADP + phosphate + 5 H(+)(out). Produces ATP from ADP in the presence of a proton gradient across the membrane. The alpha chain is a regulatory subunit. The protein is ATP synthase subunit alpha of Psychrobacter arcticus (strain DSM 17307 / VKM B-2377 / 273-4).